We begin with the raw amino-acid sequence, 282 residues long: Bifunctional protein FolD (282 aa).

Residues 164–166 (GAS), isoleucine 189, and isoleucine 230 contribute to the NADP(+) site.

It belongs to the tetrahydrofolate dehydrogenase/cyclohydrolase family. In terms of assembly, homodimer.

It carries out the reaction (6R)-5,10-methylene-5,6,7,8-tetrahydrofolate + NADP(+) = (6R)-5,10-methenyltetrahydrofolate + NADPH. The catalysed reaction is (6R)-5,10-methenyltetrahydrofolate + H2O = (6R)-10-formyltetrahydrofolate + H(+). It functions in the pathway one-carbon metabolism; tetrahydrofolate interconversion. Its function is as follows. Catalyzes the oxidation of 5,10-methylenetetrahydrofolate to 5,10-methenyltetrahydrofolate and then the hydrolysis of 5,10-methenyltetrahydrofolate to 10-formyltetrahydrofolate. This chain is Bifunctional protein FolD, found in Campylobacter jejuni (strain RM1221).